The chain runs to 135 residues: Large ribosomal subunit protein uL16c (135 aa).

The protein belongs to the universal ribosomal protein uL16 family. As to quaternary structure, part of the 50S ribosomal subunit.

It localises to the plastid. Its subcellular location is the chloroplast. In Lepidium virginicum (Virginia pepperweed), this protein is Large ribosomal subunit protein uL16c.